Here is a 491-residue protein sequence, read N- to C-terminus: Acetyl-coenzyme A carboxylase carboxyl transferase subunit beta, chloroplastic (491 aa).

The 263-residue stretch at 229–491 folds into the CoA carboxyltransferase N-terminal domain; the sequence is LWVQCENCYG…FQLHGFFPLT (263 aa). Residues cysteine 233, cysteine 236, cysteine 252, and cysteine 255 each contribute to the Zn(2+) site. Residues 233 to 255 form a C4-type zinc finger; the sequence is CENCYGLNYKQFFRSRLNICEHC.

It belongs to the AccD/PCCB family. Acetyl-CoA carboxylase is a heterohexamer composed of biotin carboxyl carrier protein, biotin carboxylase and 2 subunits each of ACCase subunit alpha and ACCase plastid-coded subunit beta (accD). The cofactor is Zn(2+).

The protein resides in the plastid. It is found in the chloroplast stroma. The enzyme catalyses N(6)-carboxybiotinyl-L-lysyl-[protein] + acetyl-CoA = N(6)-biotinyl-L-lysyl-[protein] + malonyl-CoA. It participates in lipid metabolism; malonyl-CoA biosynthesis; malonyl-CoA from acetyl-CoA: step 1/1. Functionally, component of the acetyl coenzyme A carboxylase (ACC) complex. Biotin carboxylase (BC) catalyzes the carboxylation of biotin on its carrier protein (BCCP) and then the CO(2) group is transferred by the transcarboxylase to acetyl-CoA to form malonyl-CoA. In Lemna minor (Common duckweed), this protein is Acetyl-coenzyme A carboxylase carboxyl transferase subunit beta, chloroplastic.